A 509-amino-acid chain; its full sequence is Ceramide glucosyltransferase (509 aa).

At 1 to 42 the chain is on the lumenal side; that stretch reads MIMQLGLTSLAFLALKCDAYNIAPKIDTPNVEPFAPSGGLKL. The helical transmembrane segment at 43–63 threads the bilayer; sequence LAIVAIIWYVVVLLVAYYGFF. Over 64 to 384 the chain is Cytoplasmic; it reads EIMQKFSKRK…EATLLEPTTE (321 aa). A short sequence motif (D1) is located at residue Asp-123. Position 179 (Asp-179) is a short sequence motif, D2. Position 321 (Asp-321) is a short sequence motif, D3. Catalysis depends on Asp-321, which acts as the Proton acceptor. A (Q/R)XXRW motif is present at residues 361 to 365; that stretch reads RRIRW. Residues 385 to 405 form a helical membrane-spanning segment; it reads CLLCGTFGTFAISTLFLQSYF. The Lumenal portion of the chain corresponds to 406-408; the sequence is NWK. A helical membrane pass occupies residues 409 to 429; that stretch reads FFIFHLLVWMVTDYTQFHILL. Residues 430–466 lie on the Cytoplasmic side of the membrane; the sequence is TNASQDTATCNVPYFAEPNFNAYGSPFESSNLRTFHR. A helical transmembrane segment spans residues 467-487; the sequence is WVLYWLLREVLALPIWISAML. Over 488 to 509 the chain is Lumenal; sequence GTRIIWRNRPFRINVDLSAEEL.

This sequence belongs to the glycosyltransferase 2 family.

It localises to the golgi apparatus membrane. It catalyses the reaction an N-acylsphing-4-enine + UDP-alpha-D-glucose = a beta-D-glucosyl-(1&lt;-&gt;1')-N-acylsphing-4-enine + UDP + H(+). The protein operates within lipid metabolism; sphingolipid metabolism. Its function is as follows. Catalyzes the final step in the biosynthesis of the membrane lipid glucosylceramide (GluCer), the transfer of glucose to ceramide. Glucosylceramides play important roles in growth, differentiation and pathogenicity. The protein is Ceramide glucosyltransferase of Komagataella phaffii (strain GS115 / ATCC 20864) (Yeast).